We begin with the raw amino-acid sequence, 143 residues long: Protein STIG1 (143 aa).

Residues M1 to G23 form the signal peptide. Positions R76 to L87 are sufficient for PI(4)P binding. The sufficient for binding to the extracellular domain of PRK2 stretch occupies residues F80–F83. Residues F88–I115 are sufficient for PI(3)P binding.

Belongs to the STIG1 family. As to quaternary structure, interacts with PRK1 and PRK2 (via extracellular domain). As to expression, expressed in the stigma and the upper section of the style.

It localises to the secreted. The protein localises to the extracellular space. Its subcellular location is the apoplast. Promotes pollen tube growth. A C-terminal peptide is cleaved from the propeptide in the stigmatic exudate and represent the major form of STIG1. Binds phosphoinositol lipids. The binding of external phosphatidylinositol 3-phosphate (PI(3)P) and PRK2 by STIG1 induces a rapid intracellular reactive oxygen species elevation. The protein is Protein STIG1 of Solanum lycopersicum (Tomato).